The following is a 1516-amino-acid chain: Lysine-specific demethylase 5C (1516 aa).

The 42-residue stretch at 14-55 (CPVFEPSWAEFRDPLGYIAKIRPIAEKSGICKIRPPADWQPP) folds into the JmjN domain. The region spanning 24–128 (FRDPLGYIAK…IVYPYEMYQS (105 aa)) is the ARID domain. Residues 142–151 (NEEKDKEYKP) are compositionally biased toward basic and acidic residues. The interval 142–186 (NEEKDKEYKPHSIPLRQSVQPSKFNSYGRRAKRLQPDPEPTEEDI) is disordered. Polar residues predominate over residues 156–166 (LRQSVQPSKFN). Glycyl lysine isopeptide (Lys-Gly) (interchain with G-Cter in SUMO2) cross-links involve residues K164, K188, K203, and K233. The tract at residues 216–262 (LRKKDKEGPECPPTVVVKEESGGDVKVESTSPKTFLESKEELSHSPE) is disordered. Positions 232 to 242 (VKEESGGDVKV) are enriched in basic and acidic residues. Position 246 is a phosphoserine (S246). K254 is covalently cross-linked (Glycyl lysine isopeptide (Lys-Gly) (interchain with G-Cter in SUMO2)). S260 and S276 each carry phosphoserine. The PHD-type 1 zinc finger occupies 283–333 (SYVCRMCSRGDEDDKLLLCDGCDDNYHIFCLLPPLPEIPKGVWRCPKCVMA). Y399 contacts 2-oxoglutarate. The JmjC domain maps to 427-593 (EYATSGWNLN…AGRQCIEHYR (167 aa)). Fe cation-binding residues include H473 and E475. 2-oxoglutarate-binding residues include S481, N483, and K491. H561 provides a ligand contact to Fe cation. The C5HC2 zinc-finger motif lies at 666–718 (CIKCKTTCFLSALACYDCPDGLVCLSHINDLCKCSSSRQYLRYRYTLDELPAM). Residues S852 and S856 each carry the phosphoserine modification. K1086 is covalently cross-linked (Glycyl lysine isopeptide (Lys-Gly) (interchain with G-Cter in SUMO2)). The PHD-type 2 zinc-finger motif lies at 1144-1209 (TSICVCGQVP…KFLCPLCMRS (66 aa)). Residues 1274–1305 (LQAEPRPEEPPTYPSTPAFDPLREGSGKDMPK) form a disordered region. The span at 1294–1304 (PLREGSGKDMP) shows a compositional bias: basic and acidic residues. At S1318 the chain carries Phosphoserine. Residues 1400–1516 (ERHGSRARGR…CPQQPPQQQL (117 aa)) form a disordered region. Residues 1404-1419 (SRARGRALERRRRRKV) show a composition bias toward basic residues. A compositionally biased stretch (basic and acidic residues) spans 1420-1437 (DRGGEGDDPAREELEPKR). The span at 1444–1459 (EAEEAHEEEELEEETG) shows a compositional bias: acidic residues. Composition is skewed to polar residues over residues 1471-1481 (GSPSTQENQNG) and 1489-1500 (SSGSSVPFSTLT).

This sequence belongs to the JARID1 histone demethylase family. Part of two distinct complexes, one containing E2F6, and the other containing REST. Interacts with ZMYND8. Requires Fe(2+) as cofactor.

The protein resides in the nucleus. It catalyses the reaction N(6),N(6),N(6)-trimethyl-L-lysyl(4)-[histone H3] + 3 2-oxoglutarate + 3 O2 = L-lysyl(4)-[histone H3] + 3 formaldehyde + 3 succinate + 3 CO2. Histone demethylase that specifically demethylates 'Lys-4' of histone H3, thereby playing a central role in histone code. Does not demethylate histone H3 'Lys-9', H3 'Lys-27', H3 'Lys-36', H3 'Lys-79' or H4 'Lys-20'. Demethylates trimethylated and dimethylated but not monomethylated H3 'Lys-4'. Participates in transcriptional repression of neuronal genes by recruiting histone deacetylases and REST at neuron-restrictive silencer elements. This is Lysine-specific demethylase 5C (KDM5C) from Sus scrofa (Pig).